A 428-amino-acid polypeptide reads, in one-letter code: Tyrosine--tRNA ligase (428 aa).

Y41 is a binding site for L-tyrosine. Residues 46 to 55 carry the 'HIGH' region motif; that stretch reads PTADSLHLGH. Positions 179 and 183 each coordinate L-tyrosine. The short motif at 239–243 is the 'KMSKS' region element; sequence KFGKT. Residue K242 coordinates ATP. The S4 RNA-binding domain maps to 361–418; the sequence is ADLMQALVDSELQPSRGQARKTIASNAITINGEKQSDPEYTFSDSDRLFGRYTLLRRG.

The protein belongs to the class-I aminoacyl-tRNA synthetase family. TyrS type 1 subfamily. As to quaternary structure, homodimer.

The protein localises to the cytoplasm. The catalysed reaction is tRNA(Tyr) + L-tyrosine + ATP = L-tyrosyl-tRNA(Tyr) + AMP + diphosphate + H(+). Functionally, catalyzes the attachment of tyrosine to tRNA(Tyr) in a two-step reaction: tyrosine is first activated by ATP to form Tyr-AMP and then transferred to the acceptor end of tRNA(Tyr). This chain is Tyrosine--tRNA ligase, found in Cronobacter sakazakii (strain ATCC BAA-894) (Enterobacter sakazakii).